The chain runs to 278 residues: MHKRLFITLLGFIILLAGCDYSKEENQTGIFYNVFVKSMDGFLHFLGRVFQDNYGFAIISIVLIVRFILLPFMLIQVKNMHMMREKTKVVQPELDAIRDKMKHATSQEERNAANQLLMKKYQSYGINPLKNMLGCLPVLIQMPILMGLYMSLKYPSSHGITEYPHFLWFDLTQPDLIMTIIAAIMYFVQPLVNSIHYPKDQRKTYYFMMVFSPIFITYASLHSAAALGLYWSISAAFLIVQMHFAHSHYKKVALHEAKKLKQKLEQNKDNSELLTEES.

The signal sequence occupies residues 1 to 18; the sequence is MHKRLFITLLGFIILLAG. Cys-19 is lipidated: N-palmitoyl cysteine. Cys-19 carries S-diacylglycerol cysteine lipidation. Transmembrane regions (helical) follow at residues 55 to 75, 132 to 152, 176 to 196, and 224 to 244; these read GFAI…FMLI, MLGC…YMSL, LIMT…NSIH, and AAAL…QMHF.

This sequence belongs to the OXA1/ALB3/YidC family. Type 2 subfamily.

The protein localises to the cell membrane. Required for the insertion and/or proper folding and/or complex formation of integral membrane proteins into the membrane. Involved in integration of membrane proteins that insert both dependently and independently of the Sec translocase complex, as well as at least some lipoproteins. The polypeptide is Membrane protein insertase YidC 2 (Staphylococcus epidermidis (strain ATCC 12228 / FDA PCI 1200)).